The chain runs to 271 residues: 3-methyl-2-oxobutanoate hydroxymethyltransferase 1 (271 aa).

Mg(2+) contacts are provided by aspartate 53 and aspartate 92. Residues 53-54, aspartate 92, and lysine 120 each bind 3-methyl-2-oxobutanoate; that span reads DS. Residue glutamate 122 participates in Mg(2+) binding. Glutamate 189 functions as the Proton acceptor in the catalytic mechanism.

The protein belongs to the PanB family. In terms of assembly, homodecamer; pentamer of dimers. Mg(2+) is required as a cofactor.

It localises to the cytoplasm. It catalyses the reaction 3-methyl-2-oxobutanoate + (6R)-5,10-methylene-5,6,7,8-tetrahydrofolate + H2O = 2-dehydropantoate + (6S)-5,6,7,8-tetrahydrofolate. Its pathway is cofactor biosynthesis; (R)-pantothenate biosynthesis; (R)-pantoate from 3-methyl-2-oxobutanoate: step 1/2. In terms of biological role, catalyzes the reversible reaction in which hydroxymethyl group from 5,10-methylenetetrahydrofolate is transferred onto alpha-ketoisovalerate to form ketopantoate. The protein is 3-methyl-2-oxobutanoate hydroxymethyltransferase 1 of Burkholderia ambifaria (strain ATCC BAA-244 / DSM 16087 / CCUG 44356 / LMG 19182 / AMMD) (Burkholderia cepacia (strain AMMD)).